We begin with the raw amino-acid sequence, 285 residues long: Putative cytochrome c peroxidase, mitochondrial (285 aa).

Residue histidine 37 is the Proton acceptor of the active site. Histidine 161 contributes to the heme b binding site. Residue tryptophan 177 is the Tryptophan radical intermediate of the active site.

Belongs to the peroxidase family. Cytochrome c peroxidase subfamily. Forms a one-to-one complex with cytochrome c. The cofactor is heme b.

The protein localises to the mitochondrion matrix. It is found in the mitochondrion intermembrane space. It carries out the reaction 2 Fe(II)-[cytochrome c] + H2O2 + 2 H(+) = 2 Fe(III)-[cytochrome c] + 2 H2O. Functionally, destroys radicals which are normally produced within the cells and which are toxic to biological systems. This Yarrowia lipolytica (strain CLIB 122 / E 150) (Yeast) protein is Putative cytochrome c peroxidase, mitochondrial.